The chain runs to 198 residues: Ribonuclease HII (198 aa).

The region spanning Glu6–Asp198 is the RNase H type-2 domain. Asp12, Glu13, and Asp108 together coordinate a divalent metal cation.

It belongs to the RNase HII family. The cofactor is Mn(2+). Requires Mg(2+) as cofactor.

The protein localises to the cytoplasm. It carries out the reaction Endonucleolytic cleavage to 5'-phosphomonoester.. Endonuclease that specifically degrades the RNA of RNA-DNA hybrids. The polypeptide is Ribonuclease HII (Acaryochloris marina (strain MBIC 11017)).